An 86-amino-acid polypeptide reads, in one-letter code: U22-theraphotoxin-Cg1a (86 aa).

The N-terminal stretch at 1–20 is a signal peptide; the sequence is MKVSVVLAITVLALLSVAYA. Residues 21-51 constitute a propeptide that is removed on maturation; it reads SEFEEKELVKEVVRTIFLGKEDAALREETDR. 3 cysteine pairs are disulfide-bonded: C53–C67, C60–C72, and C66–C79. F85 carries the post-translational modification Phenylalanine amide.

Belongs to the neurotoxin 10 (Hwtx-1) family. 42 (Jztx-44) subfamily. In terms of tissue distribution, expressed by the venom gland.

Its subcellular location is the secreted. Its function is as follows. Probable ion channel inhibitor. This chain is U22-theraphotoxin-Cg1a, found in Chilobrachys guangxiensis (Chinese earth tiger tarantula).